The sequence spans 209 residues: Ribonuclease HII (209 aa).

The 191-residue stretch at 19 to 209 folds into the RNase H type-2 domain; that stretch reads CTIVGVDEVG…ASGITKLYNK (191 aa). A divalent metal cation is bound by residues aspartate 25, glutamate 26, and aspartate 118.

The protein belongs to the RNase HII family. The cofactor is Mn(2+). Mg(2+) is required as a cofactor.

Its subcellular location is the cytoplasm. The enzyme catalyses Endonucleolytic cleavage to 5'-phosphomonoester.. Endonuclease that specifically degrades the RNA of RNA-DNA hybrids. The sequence is that of Ribonuclease HII from Ehrlichia chaffeensis (strain ATCC CRL-10679 / Arkansas).